Reading from the N-terminus, the 428-residue chain is Light-independent protochlorophyllide reductase subunit N (428 aa).

[4Fe-4S] cluster is bound by residues Cys30, Cys55, and Cys116.

The protein belongs to the BchN/ChlN family. As to quaternary structure, protochlorophyllide reductase is composed of three subunits; BchL, BchN and BchB. Forms a heterotetramer of two BchB and two BchN subunits. Requires [4Fe-4S] cluster as cofactor.

It catalyses the reaction chlorophyllide a + oxidized 2[4Fe-4S]-[ferredoxin] + 2 ADP + 2 phosphate = protochlorophyllide a + reduced 2[4Fe-4S]-[ferredoxin] + 2 ATP + 2 H2O. It functions in the pathway porphyrin-containing compound metabolism; bacteriochlorophyll biosynthesis (light-independent). Its function is as follows. Component of the dark-operative protochlorophyllide reductase (DPOR) that uses Mg-ATP and reduced ferredoxin to reduce ring D of protochlorophyllide (Pchlide) to form chlorophyllide a (Chlide). This reaction is light-independent. The NB-protein (BchN-BchB) is the catalytic component of the complex. The polypeptide is Light-independent protochlorophyllide reductase subunit N (Bradyrhizobium sp. (strain BTAi1 / ATCC BAA-1182)).